We begin with the raw amino-acid sequence, 400 residues long: ATP phosphoribosyltransferase regulatory subunit (400 aa).

This sequence belongs to the class-II aminoacyl-tRNA synthetase family. HisZ subfamily. Heteromultimer composed of HisG and HisZ subunits.

It is found in the cytoplasm. Its pathway is amino-acid biosynthesis; L-histidine biosynthesis; L-histidine from 5-phospho-alpha-D-ribose 1-diphosphate: step 1/9. Its function is as follows. Required for the first step of histidine biosynthesis. May allow the feedback regulation of ATP phosphoribosyltransferase activity by histidine. The sequence is that of ATP phosphoribosyltransferase regulatory subunit from Hahella chejuensis (strain KCTC 2396).